Here is a 419-residue protein sequence, read N- to C-terminus: Probable 3-isopropylmalate dehydratase large subunit (419 aa).

The [4Fe-4S] cluster site is built by C299, C359, and C362.

Belongs to the aconitase/IPM isomerase family. LeuC type 2 subfamily. Heterodimer of LeuC and LeuD. The cofactor is [4Fe-4S] cluster.

The catalysed reaction is (2R,3S)-3-isopropylmalate = (2S)-2-isopropylmalate. The protein operates within amino-acid biosynthesis; L-leucine biosynthesis; L-leucine from 3-methyl-2-oxobutanoate: step 2/4. Its function is as follows. Catalyzes the isomerization between 2-isopropylmalate and 3-isopropylmalate, via the formation of 2-isopropylmaleate. This chain is Probable 3-isopropylmalate dehydratase large subunit, found in Methanothermobacter thermautotrophicus (strain ATCC 29096 / DSM 1053 / JCM 10044 / NBRC 100330 / Delta H) (Methanobacterium thermoautotrophicum).